We begin with the raw amino-acid sequence, 301 residues long: Protoheme IX farnesyltransferase (301 aa).

The next 9 membrane-spanning stretches (helical) occupy residues 34 to 54, 55 to 75, 102 to 121, 125 to 144, 152 to 172, 181 to 201, 222 to 242, 247 to 267, and 280 to 300; these read LVVF…HPLI, GLVS…FNMW, AWEC…AIAV, SALL…TMLL, IVIG…SVSG, LFAI…LLTL, SHIL…GLFV, LYEI…IAVF, and GLFK…IACV.

The protein belongs to the UbiA prenyltransferase family. Protoheme IX farnesyltransferase subfamily.

The protein localises to the cell inner membrane. The catalysed reaction is heme b + (2E,6E)-farnesyl diphosphate + H2O = Fe(II)-heme o + diphosphate. Its pathway is porphyrin-containing compound metabolism; heme O biosynthesis; heme O from protoheme: step 1/1. Its function is as follows. Converts heme B (protoheme IX) to heme O by substitution of the vinyl group on carbon 2 of heme B porphyrin ring with a hydroxyethyl farnesyl side group. The chain is Protoheme IX farnesyltransferase from Anaplasma marginale (strain Florida).